Here is a 99-residue protein sequence, read N- to C-terminus: Cell division protein FtsB (99 aa).

The Cytoplasmic portion of the chain corresponds to 1-3; it reads MRV. The helical transmembrane segment at 4 to 21 threads the bilayer; it reads FTAILLILLVLLQYRLWF. Over 22 to 99 the chain is Periplasmic; that stretch reads GKNSVPDYLV…KENSTRNVNN (78 aa). Positions 29-53 form a coiled coil; that stretch reads YLVLKENVVRQQSANEKLQQRNKLL.

It belongs to the FtsB family. In terms of assembly, part of a complex composed of FtsB, FtsL and FtsQ.

Its subcellular location is the cell inner membrane. Its function is as follows. Essential cell division protein. May link together the upstream cell division proteins, which are predominantly cytoplasmic, with the downstream cell division proteins, which are predominantly periplasmic. The protein is Cell division protein FtsB of Colwellia psychrerythraea (strain 34H / ATCC BAA-681) (Vibrio psychroerythus).